We begin with the raw amino-acid sequence, 464 residues long: Fumarate hydratase class II 1 (464 aa).

Substrate is bound by residues 96–98 (SGT), 127–130 (HPND), 137–139 (SSN), and threonine 185. Histidine 186 acts as the Proton donor/acceptor in catalysis. The active site involves serine 316. Residues serine 317 and 322 to 324 (KVN) contribute to the substrate site.

This sequence belongs to the class-II fumarase/aspartase family. Fumarase subfamily. In terms of assembly, homotetramer.

The protein localises to the cytoplasm. It carries out the reaction (S)-malate = fumarate + H2O. It participates in carbohydrate metabolism; tricarboxylic acid cycle; (S)-malate from fumarate: step 1/1. Functionally, involved in the TCA cycle. Catalyzes the stereospecific interconversion of fumarate to L-malate. The protein is Fumarate hydratase class II 1 of Pseudomonas aeruginosa (strain ATCC 15692 / DSM 22644 / CIP 104116 / JCM 14847 / LMG 12228 / 1C / PRS 101 / PAO1).